The sequence spans 72 residues: uncharacterized protein (72 aa).

This is an uncharacterized protein from Vertebrata (FPV).